A 187-amino-acid polypeptide reads, in one-letter code: Glutathione peroxidase 7 (187 aa).

The first 19 residues, 1–19 (MVAATVAAAWLLLWAAACA), serve as a signal peptide directing secretion. Residue cysteine 57 is part of the active site.

Belongs to the glutathione peroxidase family. Expressed in esophageal epithelial cells; expression is up-regulated after exposure to acidic bile acids.

The protein resides in the secreted. It carries out the reaction 2 glutathione + H2O2 = glutathione disulfide + 2 H2O. In terms of biological role, it protects esophageal epithelia from hydrogen peroxide-induced oxidative stress. It suppresses acidic bile acid-induced reactive oxygen species (ROS) and protects against oxidative DNA damage and double-strand breaks. This is Glutathione peroxidase 7 (GPX7) from Homo sapiens (Human).